The chain runs to 292 residues: ATP synthase gamma chain (292 aa).

This sequence belongs to the ATPase gamma chain family. As to quaternary structure, F-type ATPases have 2 components, CF(1) - the catalytic core - and CF(0) - the membrane proton channel. CF(1) has five subunits: alpha(3), beta(3), gamma(1), delta(1), epsilon(1). CF(0) has three main subunits: a, b and c.

Its subcellular location is the cell inner membrane. Produces ATP from ADP in the presence of a proton gradient across the membrane. The gamma chain is believed to be important in regulating ATPase activity and the flow of protons through the CF(0) complex. The chain is ATP synthase gamma chain from Syntrophobacter fumaroxidans (strain DSM 10017 / MPOB).